Reading from the N-terminus, the 1002-residue chain is TOG array regulator of axonemal microtubules protein 2 (1002 aa).

Disordered stretches follow at residues 54 to 74 (SSVL…EDQS), 131 to 214 (KRRL…SAQE), 332 to 351 (ETRS…KVQV), 402 to 421 (PLRG…PRRN), and 426 to 450 (LQRK…GFAR).

Belongs to the Crescerin family.

The protein is TOG array regulator of axonemal microtubules protein 2 (Togaram2) of Mus musculus (Mouse).